The following is a 171-amino-acid chain: Transcription factor E (171 aa).

Residues 5–91 form the HTH TFE/IIEalpha-type domain; sequence DNKAVRGYIQ…LWKLDLDNSV (87 aa).

Belongs to the TFE family. As to quaternary structure, monomer. Interaction with RNA polymerase subunits RpoF and RpoE is necessary for Tfe stimulatory transcription activity. Able to interact with Tbp and RNA polymerase in the absence of DNA promoter. Interacts both with the preinitiation and elongation complexes.

In terms of biological role, transcription factor that plays a role in the activation of archaeal genes transcribed by RNA polymerase. Facilitates transcription initiation by enhancing TATA-box recognition by TATA-box-binding protein (Tbp), and transcription factor B (Tfb) and RNA polymerase recruitment. Not absolutely required for transcription in vitro, but particularly important in cases where Tbp or Tfb function is not optimal. It dynamically alters the nucleic acid-binding properties of RNA polymerases by stabilizing the initiation complex and destabilizing elongation complexes. Seems to translocate with the RNA polymerase following initiation and acts by binding to the non template strand of the transcription bubble in elongation complexes. The sequence is that of Transcription factor E from Methanocella arvoryzae (strain DSM 22066 / NBRC 105507 / MRE50).